A 907-amino-acid polypeptide reads, in one-letter code: HMG box transcription factor BBX (907 aa).

Positions 1–19 (MKGSNRNKDHSTEGEGDGK) are enriched in basic and acidic residues. Disordered stretches follow at residues 1-24 (MKGS…PKRK), 37-80 (LDFS…EQRA), 152-185 (TTNK…PTPK), and 220-242 (TPEA…RQKS). Acidic residues-rich tracts occupy residues 39–52 (FSEE…EEDI) and 61–75 (DGLE…DDES). Positions 80–148 (ARRPMNAFLL…AFMKANPGYR (69 aa)) form a DNA-binding region, HMG box. The span at 152–164 (TTNKPVKSPTPTV) shows a compositional bias: polar residues. Phosphoserine is present on Ser-242. Lys-384 is covalently cross-linked (Glycyl lysine isopeptide (Lys-Gly) (interchain with G-Cter in SUMO2)). Disordered stretches follow at residues 435-483 (IIED…DIES), 495-612 (DWGV…SERS), and 628-672 (TSLR…KKFK). A compositionally biased stretch (basic residues) spans 447–457 (KIKKKKKKNKL). Phosphoserine is present on residues Ser-476 and Ser-483. Composition is skewed to basic and acidic residues over residues 496-506 (WGVDKLGETPR) and 534-550 (KKVS…ESRP). Lys-571 participates in a covalent cross-link: Glycyl lysine isopeptide (Lys-Gly) (interchain with G-Cter in SUMO2). Residues 591–612 (KPEDSDCHRKTETCGSRKSERS) are compositionally biased toward basic and acidic residues. Residues 656–668 (ESWTFNQSGTSGS) are compositionally biased toward polar residues. Lys-693 participates in a covalent cross-link: Glycyl lysine isopeptide (Lys-Gly) (interchain with G-Cter in SUMO2). Ser-701 carries the phosphoserine modification. Disordered stretches follow at residues 708-736 (KCVS…SGDK), 769-854 (NALS…SSTP), and 877-907 (VHRG…CADQ). Low complexity predominate over residues 723 to 732 (SSESTKTSKG). The segment covering 772–783 (SIPNTPEPTTMQ) has biased composition (polar residues). Ser-789 is modified (phosphoserine). Basic residues predominate over residues 790–801 (QKRKARKTKITH). Ser-811 carries the phosphoserine modification.

The protein localises to the nucleus. In terms of biological role, transcription factor that is necessary for cell cycle progression from G1 to S phase. This is HMG box transcription factor BBX (Bbx) from Mus musculus (Mouse).